A 293-amino-acid chain; its full sequence is Protease HtpX (293 aa).

2 consecutive transmembrane segments (helical) span residues 4-24 and 34-54; these read IALF…VLSL and GLMI…LLMS. Histidine 139 contacts Zn(2+). The active site involves glutamate 140. Histidine 143 provides a ligand contact to Zn(2+). The next 2 helical transmembrane spans lie at 158-178 and 193-213; these read IVNT…SGFL and MVYF…ASII. Residue glutamate 222 participates in Zn(2+) binding.

This sequence belongs to the peptidase M48B family. The cofactor is Zn(2+).

It is found in the cell inner membrane. The sequence is that of Protease HtpX from Pectobacterium atrosepticum (strain SCRI 1043 / ATCC BAA-672) (Erwinia carotovora subsp. atroseptica).